We begin with the raw amino-acid sequence, 33 residues long: Mu-theraphotoxin-Ssp1a (33 aa).

Intrachain disulfides connect Cys-2–Cys-17, Cys-9–Cys-22, and Cys-16–Cys-29. Leu-33 is subject to Leucine amide.

This sequence belongs to the neurotoxin 10 (Hwtx-1) family. 22 (Htx-4) subfamily. Expressed by the venom gland.

Its subcellular location is the secreted. Functionally, gating modifier toxin that traps voltage-sensing domain II of voltage-gated sodium channels in the resting state without significantly altering the voltage-dependence of activation and inactivation, or delay in recovery from inactivation. Inhibits hNav1.7/SCN9A (IC(50)=134 nM), followed in rank order of potency by Nav1.6/SCN8A (IC(50)=191 nM), Nav1.2/SCN2A (IC(50)=239 nM), Nav1.3/SCN3A (IC(50)=547 nM) and Nav1.1/SCN1A (IC(50)=674 nM). Its binding to Nav1.2, Nav1.3 and Nav1.7 is slowly reversible and incomplete, with ~25% of Nav1.2, ~50% of Nav1.3 and ~40% of Nav1.7 channels recovering from block after a 30 minutes washout, respectively. Binds in the aqueous cleft formed between the S1-S2 and S3-S4 loops of each channel subtype, primarily targeting the S3-S4 loop. The protein is Mu-theraphotoxin-Ssp1a of Selenotypus sp. (Feather-legged tarantula).